We begin with the raw amino-acid sequence, 464 residues long: Glutamate--tRNA ligase 1 (464 aa).

The 'HIGH' region signature appears at 8-18; sequence PSPTGHLHVGG. The 'KMSKS' region signature appears at 231–235; it reads PLSKR. Lysine 234 lines the ATP pocket.

Belongs to the class-I aminoacyl-tRNA synthetase family. Glutamate--tRNA ligase type 1 subfamily. Monomer.

The protein resides in the cytoplasm. It catalyses the reaction tRNA(Glu) + L-glutamate + ATP = L-glutamyl-tRNA(Glu) + AMP + diphosphate. In terms of biological role, catalyzes the attachment of glutamate to tRNA(Glu) in a two-step reaction: glutamate is first activated by ATP to form Glu-AMP and then transferred to the acceptor end of tRNA(Glu). This Thermotoga sp. (strain RQ2) protein is Glutamate--tRNA ligase 1.